We begin with the raw amino-acid sequence, 113 residues long: Na(+)/H(+) antiporter subunit C1 (113 aa).

3 helical membrane passes run Met-1–Leu-21, Ile-28–Gly-48, and Leu-72–Phe-92.

It belongs to the CPA3 antiporters (TC 2.A.63) subunit C family. In terms of assembly, may form a heterooligomeric complex that consists of seven subunits: mnhA1, mnhB1, mnhC1, mnhD1, mnhE1, mnhF1 and mnhG1.

It is found in the cell membrane. Its function is as follows. Mnh complex is a Na(+)/H(+) antiporter involved in Na(+) excretion. This is Na(+)/H(+) antiporter subunit C1 (mnhC1) from Staphylococcus haemolyticus (strain JCSC1435).